An 89-amino-acid polypeptide reads, in one-letter code: UPF0223 protein BCG9842_B1176 (89 aa).

The protein belongs to the UPF0223 family.

The chain is UPF0223 protein BCG9842_B1176 from Bacillus cereus (strain G9842).